A 304-amino-acid polypeptide reads, in one-letter code: Glycine--tRNA ligase alpha subunit (304 aa).

Belongs to the class-II aminoacyl-tRNA synthetase family. As to quaternary structure, tetramer of two alpha and two beta subunits.

The protein resides in the cytoplasm. It carries out the reaction tRNA(Gly) + glycine + ATP = glycyl-tRNA(Gly) + AMP + diphosphate. This chain is Glycine--tRNA ligase alpha subunit, found in Tolumonas auensis (strain DSM 9187 / NBRC 110442 / TA 4).